Consider the following 407-residue polypeptide: Putative replication protein A (407 aa).

This sequence belongs to the ParA family.

The protein is Putative replication protein A of Sinorhizobium fredii (strain NBRC 101917 / NGR234).